Here is a 378-residue protein sequence, read N- to C-terminus: Diacetylchitobiose uptake system ATP-binding protein MsiK (378 aa).

An ABC transporter domain is found at 4 to 236; it reads VTFDKATRVY…PANLFVAGFI (233 aa). 38 to 45 is an ATP binding site; that stretch reads GPSGCGKS.

Belongs to the ABC transporter superfamily. As to quaternary structure, the DasABC-MsiK complex is composed of two ATP-binding proteins (MsiK), two transmembrane proteins (DasB and DasC) and a solute-binding protein (DasA). The NgcEFG-MsiK complex is composed of two ATP-binding proteins (MsiK), two transmembrane proteins (NgcF and NgcG) and a solute-binding protein (NgcE).

The protein resides in the cell membrane. Functionally, part of the ABC transporter complexes DasABC-MsiK and NgcEFG-MsiK involved in N,N'-diacetylchitobiose ((GlcNAc)2) uptake. Responsible for energy coupling to the transport system. The polypeptide is Diacetylchitobiose uptake system ATP-binding protein MsiK (Streptomyces coelicolor (strain ATCC BAA-471 / A3(2) / M145)).